The sequence spans 411 residues: Translation initiation factor 2 subunit gamma (411 aa).

A tr-type G domain is found at Q9–K203. The G1 stretch occupies residues G18–T25. Residues D21, T25, G46, and T48 each contribute to the Mg(2+) site. D21–T26 is a GTP binding site. Residues G46 to K50 are G2. Residues C61, C64, C73, and C76 each coordinate Zn(2+). Residues D90–G93 form a G3 region. Residues N146–E149 and S181–L183 each bind GTP. The segment at N146–E149 is G4. The G5 stretch occupies residues S181 to L183.

The protein belongs to the TRAFAC class translation factor GTPase superfamily. Classic translation factor GTPase family. EIF2G subfamily. In terms of assembly, heterotrimer composed of an alpha, a beta and a gamma chain. It depends on Mg(2+) as a cofactor.

It carries out the reaction GTP + H2O = GDP + phosphate + H(+). Functionally, eIF-2 functions in the early steps of protein synthesis by forming a ternary complex with GTP and initiator tRNA. This Pyrococcus furiosus (strain ATCC 43587 / DSM 3638 / JCM 8422 / Vc1) protein is Translation initiation factor 2 subunit gamma.